Reading from the N-terminus, the 468-residue chain is Glutamate--tRNA ligase (468 aa).

Positions 11–21 (PSPTGFIHLGN) match the 'HIGH' region motif. A 'KMSKS' region motif is present at residues 243-247 (KMSKR). Lys246 provides a ligand contact to ATP.

This sequence belongs to the class-I aminoacyl-tRNA synthetase family. Glutamate--tRNA ligase type 1 subfamily. In terms of assembly, monomer.

Its subcellular location is the cytoplasm. The enzyme catalyses tRNA(Glu) + L-glutamate + ATP = L-glutamyl-tRNA(Glu) + AMP + diphosphate. In terms of biological role, catalyzes the attachment of glutamate to tRNA(Glu) in a two-step reaction: glutamate is first activated by ATP to form Glu-AMP and then transferred to the acceptor end of tRNA(Glu). This Cupriavidus pinatubonensis (strain JMP 134 / LMG 1197) (Cupriavidus necator (strain JMP 134)) protein is Glutamate--tRNA ligase.